The primary structure comprises 293 residues: Release factor glutamine methyltransferase (293 aa).

Residues 130–134 (GTGSG), aspartate 153, tryptophan 182, and asparagine 199 each bind S-adenosyl-L-methionine. Substrate is bound at residue 199 to 202 (NPPY).

Belongs to the protein N5-glutamine methyltransferase family. PrmC subfamily.

The catalysed reaction is L-glutaminyl-[peptide chain release factor] + S-adenosyl-L-methionine = N(5)-methyl-L-glutaminyl-[peptide chain release factor] + S-adenosyl-L-homocysteine + H(+). Functionally, methylates the class 1 translation termination release factors RF1/PrfA and RF2/PrfB on the glutamine residue of the universally conserved GGQ motif. This chain is Release factor glutamine methyltransferase, found in Prochlorococcus marinus (strain SARG / CCMP1375 / SS120).